We begin with the raw amino-acid sequence, 113 residues long: Large ribosomal subunit protein bL19 (113 aa).

Belongs to the bacterial ribosomal protein bL19 family.

In terms of biological role, this protein is located at the 30S-50S ribosomal subunit interface and may play a role in the structure and function of the aminoacyl-tRNA binding site. The chain is Large ribosomal subunit protein bL19 from Corynebacterium jeikeium (strain K411).